A 237-amino-acid polypeptide reads, in one-letter code: Ribonuclease 3 (237 aa).

The 127-residue stretch at 8–134 (RSALLEKLGV…VIGAVYLDAG (127 aa)) folds into the RNase III domain. Residue E47 participates in Mg(2+) binding. D51 is a catalytic residue. Residues D120 and E123 each coordinate Mg(2+). Residue E123 is part of the active site. Residues 161-229 (DPKTSLQEAA…ALSAWTALTN (69 aa)) enclose the DRBM domain.

It belongs to the ribonuclease III family. In terms of assembly, homodimer. It depends on Mg(2+) as a cofactor.

It is found in the cytoplasm. It carries out the reaction Endonucleolytic cleavage to 5'-phosphomonoester.. Its function is as follows. Digests double-stranded RNA. Involved in the processing of primary rRNA transcript to yield the immediate precursors to the large and small rRNAs (23S and 16S). Processes some mRNAs, and tRNAs when they are encoded in the rRNA operon. Processes pre-crRNA and tracrRNA of type II CRISPR loci if present in the organism. The chain is Ribonuclease 3 from Leifsonia xyli subsp. xyli (strain CTCB07).